The sequence spans 412 residues: Serine hydroxymethyltransferase (412 aa).

(6S)-5,6,7,8-tetrahydrofolate-binding positions include leucine 117 and 121-123 (GHL). Lysine 226 is modified (N6-(pyridoxal phosphate)lysine). Residues glutamate 242 and 350-352 (SPF) each bind (6S)-5,6,7,8-tetrahydrofolate.

It belongs to the SHMT family. As to quaternary structure, homodimer. Pyridoxal 5'-phosphate is required as a cofactor.

Its subcellular location is the cytoplasm. It catalyses the reaction (6R)-5,10-methylene-5,6,7,8-tetrahydrofolate + glycine + H2O = (6S)-5,6,7,8-tetrahydrofolate + L-serine. Its pathway is one-carbon metabolism; tetrahydrofolate interconversion. The protein operates within amino-acid biosynthesis; glycine biosynthesis; glycine from L-serine: step 1/1. In terms of biological role, catalyzes the reversible interconversion of serine and glycine with tetrahydrofolate (THF) serving as the one-carbon carrier. Also exhibits THF-independent aldolase activity toward beta-hydroxyamino acids, producing glycine and aldehydes, via a retro-aldol mechanism. This Methanosarcina acetivorans (strain ATCC 35395 / DSM 2834 / JCM 12185 / C2A) protein is Serine hydroxymethyltransferase.